The chain runs to 138 residues: Transcription antitermination protein NusB (138 aa).

Belongs to the NusB family.

Involved in transcription antitermination. Required for transcription of ribosomal RNA (rRNA) genes. Binds specifically to the boxA antiterminator sequence of the ribosomal RNA (rrn) operons. The chain is Transcription antitermination protein NusB from Helicobacter pylori (strain P12).